Here is a 371-residue protein sequence, read N- to C-terminus: o-succinylbenzoate synthase (371 aa).

K164 serves as the catalytic Proton donor. Residues D189, E214, and D239 each contribute to the Mg(2+) site. K263 functions as the Proton acceptor in the catalytic mechanism.

It belongs to the mandelate racemase/muconate lactonizing enzyme family. MenC type 2 subfamily. Requires a divalent metal cation as cofactor.

It catalyses the reaction (1R,6R)-6-hydroxy-2-succinyl-cyclohexa-2,4-diene-1-carboxylate = 2-succinylbenzoate + H2O. It functions in the pathway quinol/quinone metabolism; 1,4-dihydroxy-2-naphthoate biosynthesis; 1,4-dihydroxy-2-naphthoate from chorismate: step 4/7. Its pathway is quinol/quinone metabolism; menaquinone biosynthesis. Functionally, converts 2-succinyl-6-hydroxy-2,4-cyclohexadiene-1-carboxylate (SHCHC) to 2-succinylbenzoate (OSB). Does not show detectable N-acylamino acid racemase (NAAAR) activity with N-acetyl-S-methionine as substrate. This chain is o-succinylbenzoate synthase, found in Bacillus subtilis (strain 168).